The sequence spans 551 residues: Eukaryotic translation initiation factor 3 subunit D-2 (551 aa).

The tract at residues 108–152 (RTRGRTGRGTPNIASLGGSTAGGATASSTKYGKGRHTRNTQNVGR) is disordered. Over residues 115–136 (RGTPNIASLGGSTAGGATASST) the composition is skewed to low complexity. Positions 290 to 304 (QFDLLTVNETSVEPP) are RNA gate. Residues 527–551 (PENAFDSDRDEEEESSEPLSNSNDN) are disordered.

Belongs to the eIF-3 subunit D family. Component of the eukaryotic translation initiation factor 3 (eIF-3) complex. The eIF-3 complex interacts with pix.

The protein resides in the cytoplasm. MRNA cap-binding component of the eukaryotic translation initiation factor 3 (eIF-3) complex, which is involved in protein synthesis of a specialized repertoire of mRNAs and, together with other initiation factors, stimulates binding of mRNA and methionyl-tRNAi to the 40S ribosome. The eIF-3 complex specifically targets and initiates translation of a subset of mRNAs involved in cell proliferation. In the eIF-3 complex, eif3d specifically recognizes and binds the 7-methylguanosine cap of a subset of mRNAs. The protein is Eukaryotic translation initiation factor 3 subunit D-2 of Drosophila simulans (Fruit fly).